Here is a 2429-residue protein sequence, read N- to C-terminus: Highly reducing polyketide synthase acrA (2429 aa).

The Ketosynthase family 3 (KS3) domain occupies 4 to 436 (PEPIAIVGMG…GTNAHAIIES (433 aa)). Residues C177, H314, and H356 each act as for beta-ketoacyl synthase activity in the active site. Residues 541-861 (VFTGQGAQWP…PYSGTLSRGQ (321 aa)) are malonyl-CoA:ACP transacylase (MAT) domain. The segment at 931 to 1068 (HPLLGVRSTE…GTVRVVLGPA (138 aa)) is N-terminal hotdog fold. The tract at residues 931-1229 (HPLLGVRSTE…RCSSLTPPGP (299 aa)) is dehydratase (DH) domain. A PKS/mFAS DH domain is found at 931–1230 (HPLLGVRSTE…CSSLTPPGPR (300 aa)). The active-site Proton acceptor; for dehydratase activity is H963. Residues 1082 to 1230 (VFHEVKTERF…CSSLTPPGPR (149 aa)) form a C-terminal hotdog fold region. The active-site Proton donor; for dehydratase activity is the D1141. Residues 1388-1577 (NGYMGRVAGQ…VNDFVDESKY (190 aa)) form a methyltransferase (MT) domain region. The segment at 2065-2235 (TYLLVGCTGG…ARGLAASVFH (171 aa)) is ketoreductase (KR) domain. Residues 2351 to 2428 (EVDGVIQEAF…ELCREAASEV (78 aa)) form the Carrier domain. S2388 carries the O-(pantetheine 4'-phosphoryl)serine modification.

Its pathway is secondary metabolite biosynthesis. Highly reducing polyketide synthase; part of the cluster that mediates the biosynthesis of acurin A, a highly reduced polyketide coupled to a serine via a peptide bond. The activities of the highly reducing polyketide synthase acrA and the nonribosomal peptide synthetase acrB are collectively responsible for the synthesis of the acurin A core structure with a heptaketide backbone produced by acrA covalently fused to a L-serine by acrB. After the formation of the PK-NRP hybrid product, it is detached from acrB by reductive release to set up the formation of the lactam ring by aldol condensation. The hydrolyase acrC then catalyzes water loss to generate a double bond in the ring. This double bond is probably reduced, which is followed by three oxidations at C-22 to generate the carboxylic acid moiety, involving probably the FAD-binding monooxygenase acrE and the cytochrome P450 monooxygenases acrD and acrF. Finally, a last methylation step performed by the O-methyltransferase acrG leads to the production of acurin A. This chain is Highly reducing polyketide synthase acrA, found in Aspergillus aculeatus (strain ATCC 16872 / CBS 172.66 / WB 5094).